Here is a 375-residue protein sequence, read N- to C-terminus: MSSHKGSAGAQGNGAPSGNREADTVELAELGPLLEEKGKRAASSPAKAEEDQACPVPQEEEEEVRVLTLPLQAHHAMEKMEEFVYKVWEGRWRVIPYDVLPDWLKDNDYLLHGHRPPMPSFRACFKSIFRIHTETGNIWTHLLGFVLFLFLGILTMLRPNMYFMAPLQEKVVFGMFFLGAVLCLSFSWLFHTVYCHSEKVSRTFSKLDYSGIALLIMGSFVPWLYYSFYCSPQPRLIYLSIVCVLGISAIIVAQWDRFATPKHRQTRAGVFLGLGLSGVVPTMHFTIAEGFVKATTVGQMGWFFLMAVMYITGAGLYAARIPERFFPGKFDIWFQSHQIFHVLVVAAAFVHFYGVSNLQEFRYGLEGGCTDDSLL.

The disordered stretch occupies residues 1 to 60; the sequence is MSSHKGSAGAQGNGAPSGNREADTVELAELGPLLEEKGKRAASSPAKAEEDQACPVPQEE. Residues 1-136 are Cytoplasmic-facing; the sequence is MSSHKGSAGA…SIFRIHTETG (136 aa). Residues 137–157 form a helical membrane-spanning segment; sequence NIWTHLLGFVLFLFLGILTML. Topologically, residues 158–170 are extracellular; the sequence is RPNMYFMAPLQEK. Residues 171 to 191 traverse the membrane as a helical segment; that stretch reads VVFGMFFLGAVLCLSFSWLFH. Residue His-191 participates in Zn(2+) binding. Topologically, residues 192–203 are cytoplasmic; the sequence is TVYCHSEKVSRT. Residues 204-224 form a helical membrane-spanning segment; sequence FSKLDYSGIALLIMGSFVPWL. The Extracellular segment spans residues 225 to 234; sequence YYSFYCSPQP. Residues 235–255 traverse the membrane as a helical segment; it reads RLIYLSIVCVLGISAIIVAQW. At 256-264 the chain is on the cytoplasmic side; sequence DRFATPKHR. The helical transmembrane segment at 265-285 threads the bilayer; it reads QTRAGVFLGLGLSGVVPTMHF. The Extracellular segment spans residues 286-298; sequence TIAEGFVKATTVG. A helical membrane pass occupies residues 299 to 319; that stretch reads QMGWFFLMAVMYITGAGLYAA. At 320–337 the chain is on the cytoplasmic side; that stretch reads RIPERFFPGKFDIWFQSH. Zn(2+) contacts are provided by His-337 and His-341. The helical transmembrane segment at 338-358 threads the bilayer; sequence QIFHVLVVAAAFVHFYGVSNL. Residues 359 to 375 lie on the Extracellular side of the membrane; the sequence is QEFRYGLEGGCTDDSLL.

It belongs to the ADIPOR family. In terms of assembly, may form homooligomers and heterooligomers with ADIPOR2. Interacts with APPL2 (via BAR domain); hinders the accessibility of APPL1 to ADIPOR1; negatively regulates adiponectin signaling; ADIPOQ dissociates this interaction and facilitates the recruitment of APPL1 to ADIPOR1. Interacts with APPL1; ADIPOQ enhances this interaction; inhibites adiponectin-stimulated binding of APPL2 to ADIPOR1. Detected in brain and quadriceps muscle (at protein level). Widely expressed. Expressed in heart, kidney, liver, lung, skeletal muscle, white adipose tissue, brown adipose tissue, aorta and spleen. Weakly expressed in brain and testis.

The protein resides in the cell membrane. In terms of biological role, receptor for ADIPOQ, an essential hormone secreted by adipocytes that regulates glucose and lipid metabolism. Required for normal glucose and fat homeostasis and for maintaining a normal body weight. ADIPOQ-binding activates a signaling cascade that leads to increased AMPK activity, and ultimately to increased fatty acid oxidation, increased glucose uptake and decreased gluconeogenesis. Has high affinity for globular adiponectin and low affinity for full-length adiponectin. The protein is Adiponectin receptor protein 1 of Mus musculus (Mouse).